Here is an 838-residue protein sequence, read N- to C-terminus: Protein P (838 aa).

A terminal protein domain (TP) region spans residues 1 to 179; the sequence is MPLSYQHFRK…FCGSPYSWEQ (179 aa). Residues 180–341 form a spacer region; that stretch reads ELQHSQRHGD…YCLSHLVNLR (162 aa). The segment at 219-245 is disordered; it reads GLQPHQGPLASSQPGRSGSIRARAHPS. Residues 342-685 are polymerase/reverse transcriptase domain (RT); the sequence is EDWGPCDDHG…YMNLYPVARQ (344 aa). The 244-residue stretch at 352–595 folds into the Reverse transcriptase domain; sequence EHHIRIPRTP…YSLNFMGYII (244 aa). Mg(2+) contacts are provided by Asp424, Asp546, and Asp547.

This sequence belongs to the hepadnaviridae P protein family.

It catalyses the reaction DNA(n) + a 2'-deoxyribonucleoside 5'-triphosphate = DNA(n+1) + diphosphate. It carries out the reaction Endonucleolytic cleavage to 5'-phosphomonoester.. With respect to regulation, activated by host HSP70 and HSP40 in vitro to be able to bind the epsilon loop of the pgRNA. Because deletion of the RNase H region renders the protein partly chaperone-independent, the chaperones may be needed indirectly to relieve occlusion of the RNA-binding site by this domain. Inhibited by several reverse-transcriptase inhibitors: Lamivudine, Adefovir and Entecavir. Its function is as follows. Multifunctional enzyme that converts the viral RNA genome into dsDNA in viral cytoplasmic capsids. This enzyme displays a DNA polymerase activity that can copy either DNA or RNA templates, and a ribonuclease H (RNase H) activity that cleaves the RNA strand of RNA-DNA heteroduplexes in a partially processive 3'- to 5'-endonucleasic mode. Neo-synthesized pregenomic RNA (pgRNA) are encapsidated together with the P protein, and reverse-transcribed inside the nucleocapsid. Initiation of reverse-transcription occurs first by binding the epsilon loop on the pgRNA genome, and is initiated by protein priming, thereby the 5'-end of (-)DNA is covalently linked to P protein. Partial (+)DNA is synthesized from the (-)DNA template and generates the relaxed circular DNA (RC-DNA) genome. After budding and infection, the RC-DNA migrates in the nucleus, and is converted into a plasmid-like covalently closed circular DNA (cccDNA). The activity of P protein does not seem to be necessary for cccDNA generation, and is presumably released from (+)DNA by host nuclear DNA repair machinery. The chain is Protein P from Hepatitis B virus genotype A2 subtype adw (isolate Japan/Nishioka/1983) (HBV-A).